The following is a 1302-amino-acid chain: Phosphoribosylformylglycinamidine synthase (1302 aa).

ATP contacts are provided by residues 307-318 (GASTGSGGEIRD) and A678. The Mg(2+) site is built by E718, N722, and D891. One can recognise a Glutamine amidotransferase type-1 domain in the interval 1049 to 1302 (MAILREQGVN…MFQNARKNIG (254 aa)). C1142 acts as the Nucleophile in catalysis. Active-site residues include H1267 and E1269.

The protein in the N-terminal section; belongs to the FGAMS family. Monomer.

It is found in the cytoplasm. It carries out the reaction N(2)-formyl-N(1)-(5-phospho-beta-D-ribosyl)glycinamide + L-glutamine + ATP + H2O = 2-formamido-N(1)-(5-O-phospho-beta-D-ribosyl)acetamidine + L-glutamate + ADP + phosphate + H(+). It participates in purine metabolism; IMP biosynthesis via de novo pathway; 5-amino-1-(5-phospho-D-ribosyl)imidazole from N(2)-formyl-N(1)-(5-phospho-D-ribosyl)glycinamide: step 1/2. In terms of biological role, phosphoribosylformylglycinamidine synthase involved in the purines biosynthetic pathway. Catalyzes the ATP-dependent conversion of formylglycinamide ribonucleotide (FGAR) and glutamine to yield formylglycinamidine ribonucleotide (FGAM) and glutamate. The protein is Phosphoribosylformylglycinamidine synthase of Vibrio parahaemolyticus serotype O3:K6 (strain RIMD 2210633).